A 456-amino-acid chain; its full sequence is Bifunctional protein GlmU (456 aa).

Positions 1–229 (MSNSSMSVVI…LSEVEGVNNR (229 aa)) are pyrophosphorylase. UDP-N-acetyl-alpha-D-glucosamine-binding positions include 11–14 (LAAG), Lys25, Gln76, 81–82 (GT), 103–105 (YGD), Gly140, Glu154, Asn169, and Asn227. Asp105 contributes to the Mg(2+) binding site. Asn227 provides a ligand contact to Mg(2+). A linker region spans residues 230 to 250 (LQLSALERVFQTEQAEKLLLA). The N-acetyltransferase stretch occupies residues 251 to 456 (GVMLLDPSRF…QGWKRPVKKK (206 aa)). UDP-N-acetyl-alpha-D-glucosamine is bound by residues Arg333 and Lys351. The active-site Proton acceptor is His363. UDP-N-acetyl-alpha-D-glucosamine is bound by residues Tyr366 and Asn377. Acetyl-CoA contacts are provided by residues Ala380, 386-387 (NY), Ser405, Ala423, and Arg440.

It in the N-terminal section; belongs to the N-acetylglucosamine-1-phosphate uridyltransferase family. This sequence in the C-terminal section; belongs to the transferase hexapeptide repeat family. Homotrimer. Mg(2+) is required as a cofactor.

It is found in the cytoplasm. The catalysed reaction is alpha-D-glucosamine 1-phosphate + acetyl-CoA = N-acetyl-alpha-D-glucosamine 1-phosphate + CoA + H(+). It catalyses the reaction N-acetyl-alpha-D-glucosamine 1-phosphate + UTP + H(+) = UDP-N-acetyl-alpha-D-glucosamine + diphosphate. Its pathway is nucleotide-sugar biosynthesis; UDP-N-acetyl-alpha-D-glucosamine biosynthesis; N-acetyl-alpha-D-glucosamine 1-phosphate from alpha-D-glucosamine 6-phosphate (route II): step 2/2. The protein operates within nucleotide-sugar biosynthesis; UDP-N-acetyl-alpha-D-glucosamine biosynthesis; UDP-N-acetyl-alpha-D-glucosamine from N-acetyl-alpha-D-glucosamine 1-phosphate: step 1/1. It functions in the pathway bacterial outer membrane biogenesis; LPS lipid A biosynthesis. Its function is as follows. Catalyzes the last two sequential reactions in the de novo biosynthetic pathway for UDP-N-acetylglucosamine (UDP-GlcNAc). The C-terminal domain catalyzes the transfer of acetyl group from acetyl coenzyme A to glucosamine-1-phosphate (GlcN-1-P) to produce N-acetylglucosamine-1-phosphate (GlcNAc-1-P), which is converted into UDP-GlcNAc by the transfer of uridine 5-monophosphate (from uridine 5-triphosphate), a reaction catalyzed by the N-terminal domain. The chain is Bifunctional protein GlmU from Yersinia pseudotuberculosis serotype O:1b (strain IP 31758).